A 272-amino-acid polypeptide reads, in one-letter code: Putative phosphatase BU028/BU029 (272 aa).

The Nucleophile role is filled by aspartate 8. Aspartate 8 provides a ligand contact to Mg(2+). Residue leucine 9 coordinates phosphate. Aspartate 10 serves as a coordination point for Mg(2+). Phosphate is bound by residues 42–43 and lysine 191; that span reads SG. Position 214 (aspartate 214) interacts with Mg(2+). Position 217 (asparagine 217) interacts with phosphate.

This sequence belongs to the HAD-like hydrolase superfamily. Cof family. The cofactor is Mg(2+).

The sequence is that of Putative phosphatase BU028/BU029 from Buchnera aphidicola subsp. Acyrthosiphon pisum (strain APS) (Acyrthosiphon pisum symbiotic bacterium).